We begin with the raw amino-acid sequence, 1682 residues long: MRCFFRWTKSFVTAPWSLIFILFTIQYEYGSGKKYGGPCGGRNCSVCQCFPEKGSRGHPGPLGPQGPIGPLGPLGPIGIPGEKGERGDSGSPGPPGEKGDKGPTGVPGFPGVDGVPGHPGPPGPRGKPGVDGYNGSRGDPGYPGERGAPGPGGPPGQPGENGEKGRSVYITGGVKGIQGDRGDPGPPGLPGSRGAQGSPGPMGHAGAPGLAGPIGHPGSPGLKGNPATGLKGQRGEPGEVGQRGPPGPTLLVQPPDLSIYKGEKGVKGMPGMIGPPGPPGRKGAPGVGIKGEKGIPGFPGPRGEPGSHGPPGFPGFKGIQGAAGEPGLFGFLGPKGDLGDRGYPGPPGILLTPAPPLKGVPGDPGPPGYYGEIGDVGLPGPPGPPGRPGETCPGMMGPPGPPGVPGPPGFPGEAGVPGRLDCAPGKPGKPGLPGLPGAPGPEGPPGSDVIYCRPGCPGPMGEKGKVGPPGRRGAKGAKGNKGLCTCPPGPMGPPGPPGPPGRQGSKGDLGLPGWHGEKGDPGQPGAEGPPGPPGRPGAMGPPGHKGEKGDMVISRVKGQKGERGLDGPPGFPGPHGQDGGDGRPGERGDPGPRGDHKDAAPGERGLPGLPGPPGRTGPEGPPGLGFPGPPGQRGLPGEPGRPGTRGFDGTKGQKGDSILCNVSYPGKPGLPGLDGPPGLKGFPGPPGAPGMRCPDGQKGQRGKPGMSGIPGPPGFRGDMGDPGIKGEKGTSPIGPPGPPGSPGKDGQKGIPGDPAFGDPGPPGERGLPGAPGMKGQKGHPGCPGAGGPPGIPGSPGLKGPKGREGSRGFPGIPGSPGHSCERGAPGIPGQPGLPGTPGDPGAPGWKGQPGDMGPSGPAGMKGLPGLPGLPGADGLRGPPGIPGPNGEDGLPGLPGLKGLPGLPGFPGFPGERGKPGPDGEPGRKGEVGEKGWPGLKGDLGERGAKGDRGLPGDAGEAVTSRKGEPGDAGPPGDGGFSGERGDKGSSGMRGGRGDPGRDGLPGLHRGQPGIDGPPGPPGPPGPPGSPGLRGVIGFPGFPGDQGDPGSPGPPGFPGDDGARGPKGYKGDPASQCGPPGPKGEPGSPGYQGRTGVPGEKGFPGDEGPRGPPGRPGQPGSFGPPGCPGDPGMPGLKGHPGEVGDPGPRGDAGDFGRPGPAGVKGPLGSPGLNGLHGLKGEKGTKGASGLLEMGPPGPMGMPGQKGEKGDPGSPGISPPGLPGEKGFPGPPGRPGPPGPAGAPGRAAKGDIPDPGPPGDRGPPGPDGPRGVPGPPGSPGNVDLLKGDPGDCGLPGPPGSRGPPGPPGCQGPPGCDGKDGQKGPMGLPGLPGPPGLPGAPGEKGLPGPPGRKGPVGPPGCRGEPGPPADVDSCPRIPGLPGVPGPRGPEGAMGEPGRRGLPGPGCKGEPGPDGRRGQDGIPGSPGPPGRKGDTGEAGCPGAPGPPGPTGDPGPKGFGPGSLSGFLLVLHSQTDQEPACPVGMPRLWTGYSLLYMEGQEKAHNQDLGLAGSCLPVFSTLPFAYCNIHQVCHYAQRNDRSYWLSSAAPLPMMPLSEEEIRSYISRCAVCEAPAQAVAVHSQDQSIPPCPRTWRSLWIGYSFLMHTGAGDQGGGQALMSPGSCLEDFRAAPFVECQGRQGTCHFFANEYSFWLTTVNPDLQFASGPSPDTLKEVQAQRRKISRCQVCMKHS.

An N-terminal signal peptide occupies residues 1–32 (MRCFFRWTKSFVTAPWSLIFILFTIQYEYGSG). The interval 31–56 (SGKKYGGPCGGRNCSVCQCFPEKGSR) is 7S domain. N-linked (GlcNAc...) asparagine glycosylation is present at asparagine 43. Disordered stretches follow at residues 56 to 255 (RGHP…VQPP) and 379 to 1453 (PGPP…FGPG). A triple-helical region region spans residues 57-1451 (GHPGPLGPQG…TGDPGPKGFG (1395 aa)). Positions 86–88 (RGD) match the Cell attachment site motif. The segment covering 103–116 (PTGVPGFPGVDGVP) has biased composition (low complexity). A glycan (N-linked (GlcNAc...) asparagine) is linked at asparagine 134. 2 consecutive short sequence motifs (cell attachment site) follow at residues 137–139 (RGD) and 181–183 (RGD). A compositionally biased stretch (pro residues) spans 396 to 410 (MGPPGPPGVPGPPGF). A compositionally biased stretch (low complexity) spans 411–426 (PGEAGVPGRLDCAPGK). The span at 487 to 500 (PPGPMGPPGPPGPP) shows a compositional bias: pro residues. The span at 578–601 (DGGDGRPGERGDPGPRGDHKDAAP) shows a compositional bias: basic and acidic residues. 2 consecutive short sequence motifs (cell attachment site) follow at residues 587 to 589 (RGD) and 593 to 595 (RGD). Residues 609–621 (LPGPPGRTGPEGP) show a composition bias toward pro residues. Positions 632–647 (QRGLPGEPGRPGTRGF) are enriched in low complexity. A glycan (N-linked (GlcNAc...) asparagine) is linked at asparagine 661. The span at 665-682 (PGKPGLPGLDGPPGLKGF) shows a compositional bias: low complexity. The short motif at 716–718 (RGD) is the Cell attachment site element. Composition is skewed to low complexity over residues 742 to 758 (PGKD…AFGD) and 857 to 902 (PAGM…LPGL). Basic and acidic residues-rich tracts occupy residues 911–929 (ERGK…EVGE) and 938–950 (DLGE…DRGL). Residues 969–978 (GPPGDGGFSG) show a composition bias toward gly residues. Short sequence motifs (cell attachment site) lie at residues 980–982 (RGD) and 992–994 (RGD). Over residues 998–1010 (DGLPGLHRGQPGI) the composition is skewed to low complexity. Residues 1011-1025 (DGPPGPPGPPGPPGS) show a composition bias toward pro residues. The span at 1034-1044 (FPGFPGDQGDP) shows a compositional bias: low complexity. The short motif at 1144–1146 (RGD) is the Cell attachment site element. 5 stretches are compositionally biased toward pro residues: residues 1223 to 1235 (PGPP…PGPA), 1248 to 1272 (DPGP…PPGS), 1289 to 1304 (PGPP…PGCQ), 1340 to 1351 (PGPPGRKGPVGP), and 1435 to 1444 (APGPPGPTGD). The 226-residue stretch at 1457–1682 (GFLLVLHSQT…SRCQVCMKHS (226 aa)) folds into the Collagen IV NC1 domain. Disulfide bonds link cysteine 1472–cysteine 1561, cysteine 1505–cysteine 1558, cysteine 1517–cysteine 1523, cysteine 1580–cysteine 1678, cysteine 1614–cysteine 1675, and cysteine 1626–cysteine 1633.

Belongs to the type IV collagen family. As to quaternary structure, there are six type IV collagen isoforms, alpha 1(IV)-alpha 6(IV), each of which can form a triple helix structure with 2 other chains to generate type IV collagen network. The alpha 3(IV) chain forms a triple helical protomer with alpha 4(IV) and alpha 5(IV); this triple helical structure dimerizes through NC1-NC1 domain interactions such that the alpha 3(IV), alpha 4(IV) and alpha 5(IV) chains of one protomer connect with the alpha 5(IV), alpha 4(IV) and alpha 3(IV) chains of the opposite protomer, respectively. Associates with LAMB2 at the neuromuscular junction and in GBM. In terms of processing, prolines at the third position of the tripeptide repeating unit (G-X-Y) are hydroxylated in some or all of the chains. Post-translationally, type IV collagens contain numerous cysteine residues which are involved in inter- and intramolecular disulfide bonding. 12 of these, located in the NC1 domain, are conserved in all known type IV collagens. The trimeric structure of the NC1 domains is stabilized by covalent bonds between Lys and Met residues. As to expression, expressed in Bruch's membrane, outer plexiform layer, inner nuclear layer, inner plexiform layer, ganglion cell layer, inner limiting membrane and around the blood vessels of the retina (at protein level). Highly expressed in kidney and lung. Detected at lower levels in heart, muscle and skin.

Its subcellular location is the secreted. The protein resides in the extracellular space. The protein localises to the extracellular matrix. It localises to the basement membrane. Its function is as follows. Type IV collagen is the major structural component of glomerular basement membranes (GBM), forming a 'chicken-wire' meshwork together with laminins, proteoglycans and entactin/nidogen. This is Collagen alpha-4(IV) chain from Mus musculus (Mouse).